A 336-amino-acid chain; its full sequence is UPF0324 membrane protein BT_1919 (336 aa).

The next 8 helical transmembrane spans lie at 2–19, 23–45, 85–107, 117–134, 147–169, 210–232, 253–275, and 310–332; these read LHGVLLIALFSCAAFYIG, FVRSISFSPMIVGIILGMLYANS, IGLPAMLIDVIIVAVTICGGIYL, IALLTSIGSGICGAAAIL, TAVSVSTVVIFGTISMFLYPFLY, AIIVKMIRVMMLVPVLLITTYLV, WFAIGFMGVIAFNSFDLLPAQLV, and FVLALLLYVWLVVGGYFLVKYLT.

It belongs to the UPF0324 family.

The protein localises to the cell membrane. This is UPF0324 membrane protein BT_1919 from Bacteroides thetaiotaomicron (strain ATCC 29148 / DSM 2079 / JCM 5827 / CCUG 10774 / NCTC 10582 / VPI-5482 / E50).